The following is a 131-amino-acid chain: Fumarate reductase subunit C (131 aa).

3 helical membrane passes run 30–50 (EGTAVPAVWFSIELIFGLFAL), 63–83 (FLQNPVIVIINLITLAAALLH), and 109–129 (IIKSLWAVTVVATIVILFVAL).

It belongs to the FrdC family. Part of an enzyme complex containing four subunits: a flavoprotein (FrdA), an iron-sulfur protein (FrdB), and two hydrophobic anchor proteins (FrdC and FrdD).

The protein localises to the cell inner membrane. In terms of biological role, two distinct, membrane-bound, FAD-containing enzymes are responsible for the catalysis of fumarate and succinate interconversion; fumarate reductase is used in anaerobic growth, and succinate dehydrogenase is used in aerobic growth. Anchors the catalytic components of the fumarate reductase complex to the cell inner membrane, binds quinones. This Shigella boydii serotype 4 (strain Sb227) protein is Fumarate reductase subunit C.